A 1157-amino-acid chain; its full sequence is DNA-directed RNA polymerase subunit beta (1157 aa).

Belongs to the RNA polymerase beta chain family. In terms of assembly, the RNAP catalytic core consists of 2 alpha, 1 beta, 1 beta' and 1 omega subunit. When a sigma factor is associated with the core the holoenzyme is formed, which can initiate transcription.

The enzyme catalyses RNA(n) + a ribonucleoside 5'-triphosphate = RNA(n+1) + diphosphate. Functionally, DNA-dependent RNA polymerase catalyzes the transcription of DNA into RNA using the four ribonucleoside triphosphates as substrates. This is DNA-directed RNA polymerase subunit beta from Tropheryma whipplei (strain TW08/27) (Whipple's bacillus).